Reading from the N-terminus, the 397-residue chain is Elongation factor Tu (397 aa).

The tr-type G domain maps to 10–207; sequence KPHVNVGTIG…ACDSYIPDPQ (198 aa). Residues 19 to 26 form a G1 region; that stretch reads GHIDHGKT. 19–26 contributes to the GTP binding site; it reads GHIDHGKT. Mg(2+) is bound at residue Thr26. The segment at 60 to 64 is G2; that stretch reads GITIA. The G3 stretch occupies residues 81–84; it reads DCPG. Residues 81–85 and 136–139 each bind GTP; these read DCPGH and NKCD. Residues 136–139 form a G4 region; that stretch reads NKCD. A G5 region spans residues 174-176; it reads SAL.

Belongs to the TRAFAC class translation factor GTPase superfamily. Classic translation factor GTPase family. EF-Tu/EF-1A subfamily. Monomer.

It is found in the cytoplasm. It carries out the reaction GTP + H2O = GDP + phosphate + H(+). In terms of biological role, GTP hydrolase that promotes the GTP-dependent binding of aminoacyl-tRNA to the A-site of ribosomes during protein biosynthesis. The polypeptide is Elongation factor Tu (Lawsonia intracellularis (strain PHE/MN1-00)).